A 277-amino-acid chain; its full sequence is Probable endonuclease 4 (277 aa).

Positions 67, 107, 142, 176, 179, 211, 224, 226, and 256 each coordinate Zn(2+).

The protein belongs to the AP endonuclease 2 family. It depends on Zn(2+) as a cofactor.

It catalyses the reaction Endonucleolytic cleavage to 5'-phosphooligonucleotide end-products.. In terms of biological role, endonuclease IV plays a role in DNA repair. It cleaves phosphodiester bonds at apurinic or apyrimidinic (AP) sites, generating a 3'-hydroxyl group and a 5'-terminal sugar phosphate. This is Probable endonuclease 4 from Akkermansia muciniphila (strain ATCC BAA-835 / DSM 22959 / JCM 33894 / BCRC 81048 / CCUG 64013 / CIP 107961 / Muc).